The sequence spans 1366 residues: DNA-directed RNA polymerase subunit beta' (1366 aa).

Residues 1 to 40 are disordered; that stretch reads MTSTSPKSRRSSGKGRKGSKKKGKQVSQIPPLSKTPPSFR. A compositionally biased stretch (basic residues) spans 7–24; sequence KSRRSSGKGRKGSKKKGK. A compositionally biased stretch (polar residues) spans 25–38; sequence QVSQIPPLSKTPPS. Positions 250, 317, 324, and 327 each coordinate Zn(2+). Residues 1299–1366 are disordered; it reads TAAKSTSVLD…LQEEGLLADE (68 aa). Low complexity predominate over residues 1353-1366; sequence ALEGLQEEGLLADE.

Belongs to the RNA polymerase beta' chain family. RpoC2 subfamily. As to quaternary structure, in cyanobacteria the RNAP catalytic core is composed of 2 alpha, 1 beta, 1 beta', 1 gamma and 1 omega subunit. When a sigma factor is associated with the core the holoenzyme is formed, which can initiate transcription. Zn(2+) is required as a cofactor.

It carries out the reaction RNA(n) + a ribonucleoside 5'-triphosphate = RNA(n+1) + diphosphate. Functionally, DNA-dependent RNA polymerase catalyzes the transcription of DNA into RNA using the four ribonucleoside triphosphates as substrates. The polypeptide is DNA-directed RNA polymerase subunit beta' (Prochlorococcus marinus (strain MIT 9211)).